A 578-amino-acid polypeptide reads, in one-letter code: Sulfite reductase [NADPH] hemoprotein beta-component (578 aa).

C441, C447, C487, and C491 together coordinate [4Fe-4S] cluster. C491 provides a ligand contact to siroheme.

The protein belongs to the nitrite and sulfite reductase 4Fe-4S domain family. As to quaternary structure, alpha(8)-beta(8). The alpha component is a flavoprotein, the beta component is a hemoprotein. Siroheme is required as a cofactor. The cofactor is [4Fe-4S] cluster.

It catalyses the reaction hydrogen sulfide + 3 NADP(+) + 3 H2O = sulfite + 3 NADPH + 4 H(+). It functions in the pathway sulfur metabolism; hydrogen sulfide biosynthesis; hydrogen sulfide from sulfite (NADPH route): step 1/1. Component of the sulfite reductase complex that catalyzes the 6-electron reduction of sulfite to sulfide. This is one of several activities required for the biosynthesis of L-cysteine from sulfate. The protein is Sulfite reductase [NADPH] hemoprotein beta-component of Vibrio parahaemolyticus serotype O3:K6 (strain RIMD 2210633).